Here is a 118-residue protein sequence, read N- to C-terminus: RNA guanine-N7 methyltransferase activating subunit (118 aa).

Threonine 2 bears the N-acetylthreonine mark. The interaction with RNMT stretch occupies residues threonine 2–glycine 55. The tract at residues leucine 30 to tyrosine 118 is disordered. Serine 36 bears the Phosphoserine mark. Positions serine 36–glutamate 42 match the RNMT-activating domain motif. A compositionally biased stretch (low complexity) spans serine 45 to asparagine 56. Residues asparagine 56–tyrosine 118 form an RNA-binding region. Basic and acidic residues predominate over residues arginine 57–arginine 70. The span at aspartate 76–glutamine 93 shows a compositional bias: polar residues. Position 85 is an omega-N-methylarginine (arginine 85). Position 86 is a phosphoserine (serine 86). The segment covering proline 98–tyrosine 109 has biased composition (low complexity).

Belongs to the RAM family. As to quaternary structure, interacts with RNMT; this interaction enhances mRNA binding and cap methyltransferase activity.

The protein resides in the nucleus. Its function is as follows. Regulatory subunit of the mRNA-capping methyltransferase RNMT:RAMAC complex that methylates the N7 position of the added guanosine to the 5'-cap structure of mRNAs. Promotes the recruitment of the methyl donor, S-adenosyl-L-methionine, to RNMT. Regulates RNMT expression by a post-transcriptional stabilizing mechanism. Binds RNA. In Pongo abelii (Sumatran orangutan), this protein is RNA guanine-N7 methyltransferase activating subunit (RAMAC).